A 194-amino-acid polypeptide reads, in one-letter code: Alkyl hydroperoxide reductase AhpD (194 aa).

Cys132 serves as the catalytic Proton donor. An intrachain disulfide couples Cys132 to Cys135. Cys135 serves as the catalytic Cysteine sulfenic acid (-SOH) intermediate.

It belongs to the AhpD family.

The catalysed reaction is N(6)-[(R)-dihydrolipoyl]-L-lysyl-[lipoyl-carrier protein] + a hydroperoxide = N(6)-[(R)-lipoyl]-L-lysyl-[lipoyl-carrier protein] + an alcohol + H2O. Antioxidant protein with alkyl hydroperoxidase activity. Required for the reduction of the AhpC active site cysteine residues and for the regeneration of the AhpC enzyme activity. This is Alkyl hydroperoxide reductase AhpD from Koribacter versatilis (strain Ellin345).